Reading from the N-terminus, the 82-residue chain is RNA-binding protein Hfq (82 aa).

Residues 10–70 (DLFLNTVRKS…ISTIMPSQPV (61 aa)) form the Sm domain.

This sequence belongs to the Hfq family. Homohexamer.

Its function is as follows. RNA chaperone that binds small regulatory RNA (sRNAs) and mRNAs to facilitate mRNA translational regulation in response to envelope stress, environmental stress and changes in metabolite concentrations. Also binds with high specificity to tRNAs. The polypeptide is RNA-binding protein Hfq (Chelativorans sp. (strain BNC1)).